A 428-amino-acid polypeptide reads, in one-letter code: D-inositol 3-phosphate glycosyltransferase (428 aa).

His-17 is a 1D-myo-inositol 3-phosphate binding site. Residues 23–24 (QP) and Gly-31 contribute to the UDP-N-acetyl-alpha-D-glucosamine site. 1D-myo-inositol 3-phosphate is bound by residues 28 to 33 (DAGGMN), Arg-86, Tyr-119, Thr-143, and Arg-163. Residues Arg-237 and Lys-242 each contribute to the UDP-N-acetyl-alpha-D-glucosamine site. Mg(2+) contacts are provided by Tyr-312, Arg-313, and Ala-315. UDP-N-acetyl-alpha-D-glucosamine contacts are provided by Glu-325 and Glu-333. Mg(2+) is bound at residue Thr-339.

Belongs to the glycosyltransferase group 1 family. MshA subfamily. Homodimer.

It carries out the reaction 1D-myo-inositol 3-phosphate + UDP-N-acetyl-alpha-D-glucosamine = 1D-myo-inositol 2-acetamido-2-deoxy-alpha-D-glucopyranoside 3-phosphate + UDP + H(+). In terms of biological role, catalyzes the transfer of a N-acetyl-glucosamine moiety to 1D-myo-inositol 3-phosphate to produce 1D-myo-inositol 2-acetamido-2-deoxy-glucopyranoside 3-phosphate in the mycothiol biosynthesis pathway. The protein is D-inositol 3-phosphate glycosyltransferase of Thermobispora bispora (strain ATCC 19993 / DSM 43833 / CBS 139.67 / JCM 10125 / KCTC 9307 / NBRC 14880 / R51).